The following is a 274-amino-acid chain: Elongation factor Ts (274 aa).

The segment at 82-85 (TDFV) is involved in Mg(2+) ion dislocation from EF-Tu.

This sequence belongs to the EF-Ts family.

Its subcellular location is the cytoplasm. Functionally, associates with the EF-Tu.GDP complex and induces the exchange of GDP to GTP. It remains bound to the aminoacyl-tRNA.EF-Tu.GTP complex up to the GTP hydrolysis stage on the ribosome. The sequence is that of Elongation factor Ts from Christiangramia forsetii (strain DSM 17595 / CGMCC 1.15422 / KT0803) (Gramella forsetii).